A 170-amino-acid chain; its full sequence is TFIIB-type zinc finger protein (170 aa).

The segment at 1–30 (MECPVCGSNEIVWDNKNGEVVCSNCGIIID) adopts a TFIIB-type zinc-finger fold. Zn(2+) is bound by residues Cys3, Cys6, Cys22, and Cys25.

It belongs to the TFIIB family. The cofactor is Zn(2+).

In Saccharolobus shibatae (strain ATCC 51178 / DSM 5389 / JCM 8931 / NBRC 15437 / B12) (Sulfolobus shibatae), this protein is TFIIB-type zinc finger protein.